A 251-amino-acid chain; its full sequence is Phosphomannomutase (251 aa).

The active-site Nucleophile is the Asp18. Mg(2+)-binding residues include Asp18 and Asp20. Residue Asp20 is the Proton donor/acceptor of the active site. Alpha-D-mannose 1-phosphate-binding residues include Arg27, Arg129, Arg140, Arg147, Ser185, and Asp187. Residues Asp213, Phe225, Asp227, and Thr230 each coordinate Mg(2+).

It belongs to the eukaryotic PMM family. As to quaternary structure, homodimer. Mg(2+) serves as cofactor.

The protein localises to the cytoplasm. The catalysed reaction is alpha-D-mannose 1-phosphate = D-mannose 6-phosphate. It participates in nucleotide-sugar biosynthesis; GDP-alpha-D-mannose biosynthesis; alpha-D-mannose 1-phosphate from D-fructose 6-phosphate: step 2/2. Functionally, catalyzes the interconversion of mannose-6-phosphate to mannose-1-phosphate, the precursor for the synthesis of GDP-mannose. GDP-mannose is an essential sugar nucleotide for the synthesis of D-mannose-containing cell wall polysaccharides (galactomannans and glucomannans), glycolipids, glycoproteins and the antioxidant L-ascorbate. The sequence is that of Phosphomannomutase from Galdieria sulphuraria (Red alga).